A 308-amino-acid chain; its full sequence is Endonuclease G, mitochondrial (308 aa).

H148 acts as the Proton acceptor in catalysis. Residue N180 coordinates Mg(2+).

It belongs to the DNA/RNA non-specific endonuclease family. Homodimer; disulfide-linked. Interacts with crn-5, crn-4, crn-1 and cyn-13. It depends on Mg(2+) as a cofactor.

The protein localises to the mitochondrion. In terms of biological role, endonuclease important for programmed cell death; it mediates apoptotic DNA fragmentation. The polypeptide is Endonuclease G, mitochondrial (cps-6) (Caenorhabditis elegans).